The chain runs to 149 residues: Stathmin (149 aa).

A2 bears the N-acetylalanine mark. The residue at position 4 (S4) is a Phosphoserine. In terms of domain architecture, SLD spans 4-145 (SDIQVKELEK…NKESKDPADE (142 aa)). An N6-acetyllysine modification is found at K9. A Phosphoserine; by PKA modification is found at S16. At S25 the chain carries Phosphoserine; by CDK1, MAPK1 and MAPK3. Residues 27–46 (RSKESVPDFPLSPPKKKDLS) form a disordered region. At K29 the chain carries N6-methyllysine. At S31 the chain carries Phosphoserine. Position 38 is a phosphoserine; by CDK1, MAPK1 and MAPK3 (S38). The stretch at 41 to 140 (KKKDLSLEEI…EEVRKNKESK (100 aa)) forms a coiled coil. S63 carries the post-translational modification Phosphoserine; by PKA. K100 and K119 each carry N6-acetyllysine. Over residues 104–143 (KMEANKENREAQMAAKLERLREKDKHVEEVRKNKESKDPA) the composition is skewed to basic and acidic residues. The tract at residues 104-149 (KMEANKENREAQMAAKLERLREKDKHVEEVRKNKESKDPADETEAD) is disordered.

The protein belongs to the stathmin family. As to quaternary structure, binds to two alpha/beta-tubulin heterodimers. Interacts with KIST. Post-translationally, many different phosphorylated forms are observed depending on specific combinations among the sites which can be phosphorylated. MAPK is responsible for the phosphorylation of stathmin in response to NGF. Phosphorylation at Ser-16 seems to be required for neuron polarization. Highly expressed in the lateral nucleus of the amygdala.

It is found in the cytoplasm. The protein resides in the cytoskeleton. Functionally, involved in the regulation of the microtubule (MT) filament system by destabilizing microtubules. Prevents assembly and promotes disassembly of microtubules. Phosphorylation at Ser-16 may be required for axon formation during neurogenesis. Involved in the control of the learned and innate fear. In Mus musculus (Mouse), this protein is Stathmin (Stmn1).